A 372-amino-acid polypeptide reads, in one-letter code: Fatty acid conjugase FAC2 B (372 aa).

2 helical membrane-spanning segments follow: residues 44–64 (YFLF…SNYI) and 74–94 (IVWP…WMIG). The short motif at 95-99 (HECGH) is the Histidine box-1 element. The Histidine box-2 motif lies at 131–135 (HRNHH). 3 helical membrane passes run 166 to 186 (IGLM…YIMF), 217 to 237 (VLFS…IVTV), and 240 to 260 (AMPA…ILFA). The Histidine box-3 signature appears at 304–308 (HVIHH).

This sequence belongs to the fatty acid desaturase type 1 family. Expressed exclusively in the developing seeds. Not detected in leaves.

It localises to the microsome membrane. It carries out the reaction a (9Z,12Z)-octadecadienoyl-containing glycerolipid + AH2 + O2 = a (8E,10E,12Z)-octadecatrienoyl-containing glycerolipid + A + 2 H2O. Its pathway is lipid metabolism; polyunsaturated fatty acid biosynthesis. Functionally, fatty acid conjugase converting 18:2(9Z, 12Z) to calendic acid 18:3(8E, 10E, 12Z). Converts alpha-linolenic acid (18:3(9Z, 12Z, 15Z)) into 18:4(8E, 10E, 12Z, 15Z). Also has weak activity on the mono-unsaturates 16:1(9Z) and 18:1(9Z) producing two conjugated double bonds at delta(8) and delta(10) position. The polypeptide is Fatty acid conjugase FAC2 B (Calendula officinalis (Pot marigold)).